A 279-amino-acid polypeptide reads, in one-letter code: Nitrate import permease protein NrtB (279 aa).

Transmembrane regions (helical) follow at residues 25–45 (FLPY…ISAI), 91–111 (VAIG…VLGM), 149–169 (AIFV…AVGI), 200–220 (VPYV…AIVA), and 249–269 (IILA…LVAW). An ABC transmembrane type-1 domain is found at 84-267 (ILISLQRVAI…LVGLSLDRLV (184 aa)).

Belongs to the binding-protein-dependent transport system permease family. CysTW subfamily. In terms of assembly, the complex is composed of two ATP-binding proteins (NrtC and NrtD), two transmembrane proteins (NrtB) and a solute-binding protein (NrtA).

The protein localises to the cell inner membrane. Its function is as follows. Part of the ABC transporter complex NrtABCD involved in nitrate uptake. The complex is probably also involved in nitrite transport. Probably responsible for the translocation of the substrate across the membrane. The sequence is that of Nitrate import permease protein NrtB from Synechococcus elongatus (strain ATCC 33912 / PCC 7942 / FACHB-805) (Anacystis nidulans R2).